A 120-amino-acid polypeptide reads, in one-letter code: Large ribosomal subunit protein uL18 (120 aa).

Residues 1 to 22 form a disordered region; sequence MITKTSKNAARQKRHARVRAKL. Positions 10–20 are enriched in basic residues; sequence ARQKRHARVRA.

Belongs to the universal ribosomal protein uL18 family. As to quaternary structure, part of the 50S ribosomal subunit; part of the 5S rRNA/L5/L18/L25 subcomplex. Contacts the 5S and 23S rRNAs.

This is one of the proteins that bind and probably mediate the attachment of the 5S RNA into the large ribosomal subunit, where it forms part of the central protuberance. The protein is Large ribosomal subunit protein uL18 of Bacillus velezensis (strain DSM 23117 / BGSC 10A6 / LMG 26770 / FZB42) (Bacillus amyloliquefaciens subsp. plantarum).